The chain runs to 368 residues: tRNA-specific 2-thiouridylase MnmA (368 aa).

Residues 11 to 18 and M37 contribute to the ATP site; that span reads GMSGGVDS. The segment at 97-99 is interaction with target base in tRNA; sequence NPD. C102 acts as the Nucleophile in catalysis. C102 and C199 are joined by a disulfide. An ATP-binding site is contributed by G127. The interval 149-151 is interaction with tRNA; that stretch reads KDQ. C199 functions as the Cysteine persulfide intermediate in the catalytic mechanism. The tract at residues 311 to 312 is interaction with tRNA; it reads RY.

It belongs to the MnmA/TRMU family. As to quaternary structure, interacts with TusE.

Its subcellular location is the cytoplasm. The catalysed reaction is S-sulfanyl-L-cysteinyl-[protein] + uridine(34) in tRNA + AH2 + ATP = 2-thiouridine(34) in tRNA + L-cysteinyl-[protein] + A + AMP + diphosphate + H(+). In terms of biological role, catalyzes the 2-thiolation of uridine at the wobble position (U34) of tRNA(Lys), tRNA(Glu) and tRNA(Gln), leading to the formation of s(2)U34, the first step of tRNA-mnm(5)s(2)U34 synthesis. Sulfur is provided by IscS, via a sulfur-relay system. Binds ATP and its substrate tRNAs. In Shigella boydii serotype 18 (strain CDC 3083-94 / BS512), this protein is tRNA-specific 2-thiouridylase MnmA.